Reading from the N-terminus, the 454-residue chain is Kynurenine--oxoglutarate transaminase 3 (454 aa).

G71 contributes to the substrate binding site. Residue K116 is modified to N6-acetyllysine; alternate. K116 is modified (N6-succinyllysine; alternate). Residue N218 participates in substrate binding. K280 is modified (N6-(pyridoxal phosphate)lysine). R429 provides a ligand contact to substrate.

Belongs to the class-I pyridoxal-phosphate-dependent aminotransferase family. Homodimer. The cofactor is pyridoxal 5'-phosphate.

The catalysed reaction is L-kynurenine + 2-oxoglutarate = kynurenate + L-glutamate + H2O. It carries out the reaction L-kynurenine + glyoxylate = kynurenate + glycine + H2O. It catalyses the reaction 3-hydroxy-L-kynurenine + glyoxylate = xanthurenate + glycine + H2O. The enzyme catalyses an S-substituted L-cysteine + H2O = a thiol + pyruvate + NH4(+). The protein operates within amino-acid degradation; L-kynurenine degradation; kynurenate from L-kynurenine: step 1/2. In terms of biological role, catalyzes the irreversible transamination of the L-tryptophan metabolite L-kynurenine to form kynurenic acid (KA), an intermediate in the tryptophan catabolic pathway which is also a broad spectrum antagonist of the three ionotropic excitatory amino acid receptors among others. May catalyze the beta-elimination of S-conjugates and Se-conjugates of L-(seleno)cysteine, resulting in the cleavage of the C-S or C-Se bond. Has transaminase activity towards L-kynurenine, tryptophan, phenylalanine, serine, cysteine, methionine, histidine, glutamine and asparagine with glyoxylate as an amino group acceptor (in vitro). Has lower activity with 2-oxoglutarate as amino group acceptor (in vitro). The polypeptide is Kynurenine--oxoglutarate transaminase 3 (Rattus norvegicus (Rat)).